Consider the following 544-residue polypeptide: Chaperonin GroEL (544 aa).

ATP-binding positions include 29–32, 86–90, Gly413, 476–478, and Asp492; these read TLGP, DGTTT, and NAL.

It belongs to the chaperonin (HSP60) family. As to quaternary structure, forms a cylinder of 14 subunits composed of two heptameric rings stacked back-to-back. Interacts with the co-chaperonin GroES.

It is found in the cytoplasm. It carries out the reaction ATP + H2O + a folded polypeptide = ADP + phosphate + an unfolded polypeptide.. Functionally, together with its co-chaperonin GroES, plays an essential role in assisting protein folding. The GroEL-GroES system forms a nano-cage that allows encapsulation of the non-native substrate proteins and provides a physical environment optimized to promote and accelerate protein folding. This chain is Chaperonin GroEL, found in Desulfitobacterium hafniense (strain Y51).